We begin with the raw amino-acid sequence, 122 residues long: Protein YqjC (122 aa).

The signal sequence occupies residues 1-20 (MKYRIALAVSLFALSAGSYA). A disordered region spans residues 65–100 (QLRADHQKKIAKQKDEVAERQQDLAEAKQKGDADKI). The segment covering 66 to 100 (LRADHQKKIAKQKDEVAERQQDLAEAKQKGDADKI) has biased composition (basic and acidic residues).

In Escherichia coli (strain K12), this protein is Protein YqjC (yqjC).